The primary structure comprises 780 residues: ATP-dependent 6-phosphofructokinase, liver type (780 aa).

Ala-2 is modified (N-acetylalanine). Positions 2–390 (AAVDLEKLRA…NWNIYKLLAH (389 aa)) are N-terminal catalytic PFK domain 1. ATP contacts are provided by residues Gly-25, 88–89 (RC), and 118–121 (GDGS). Asp-119 provides a ligand contact to Mg(2+). Substrate-binding positions include 164–166 (SID), Arg-201, 208–210 (MGR), Glu-264, Arg-292, and 298–301 (HVQR). Asp-166 serves as the catalytic Proton acceptor. Ser-377 bears the Phosphoserine mark. Residues 391–400 (QKPPKEKSNF) are interdomain linker. The tract at residues 401–780 (SLAILNVGAP…RRTLSMDKGF (380 aa)) is C-terminal regulatory PFK domain 2. Beta-D-fructose 2,6-bisphosphate-binding positions include Arg-470, 527–531 (TISNN), Arg-565, 572–574 (MGG), and Glu-628. The O-linked (GlcNAc) serine glycan is linked to Ser-529. Residue Tyr-640 is modified to Phosphotyrosine. Beta-D-fructose 2,6-bisphosphate contacts are provided by residues Arg-654, 660 to 663 (HLQQ), and Arg-734. At Ser-775 the chain carries Phosphoserine.

The protein belongs to the phosphofructokinase type A (PFKA) family. ATP-dependent PFK group I subfamily. Eukaryotic two domain clade 'E' sub-subfamily. Homo- and heterotetramers. Phosphofructokinase (PFK) enzyme functions as a tetramer composed of different combinations of 3 types of subunits, called PFKM (where M stands for Muscle), PFKL (Liver) and PFKP (Platelet). The composition of the PFK tetramer differs according to the tissue type it is present in. In muscles, it is composed of 4 PFKM subunits (also called M4). In the liver, the predominant form is a tetramer of PFKL subunits (L4). In erythrocytes, both PFKM and PFKL subunits randomly tetramerize to form M4, L4 and other combinations (ML3, M2L2, M3L). The kinetic and regulatory properties of the tetrameric enzyme are dependent on the subunit composition, hence can vary across tissues. The cofactor is Mg(2+). In terms of processing, glcNAcylation at Ser-529 by OGT decreases enzyme activity, leading to redirect glucose flux through the oxidative pentose phosphate pathway. Glycosylation is stimulated by both hypoxia and glucose deprivation.

Its subcellular location is the cytoplasm. It carries out the reaction beta-D-fructose 6-phosphate + ATP = beta-D-fructose 1,6-bisphosphate + ADP + H(+). Its pathway is carbohydrate degradation; glycolysis; D-glyceraldehyde 3-phosphate and glycerone phosphate from D-glucose: step 3/4. Allosterically activated by ADP, AMP, or fructose 2,6-bisphosphate, and allosterically inhibited by ATP or citrate. GlcNAcylation by OGT overcomes allosteric regulation. Its function is as follows. Catalyzes the phosphorylation of D-fructose 6-phosphate to fructose 1,6-bisphosphate by ATP, the first committing step of glycolysis. Negatively regulates the phagocyte oxidative burst in response to bacterial infection by controlling cellular NADPH biosynthesis and NADPH oxidase-derived reactive oxygen species. Upon macrophage activation, drives the metabolic switch toward glycolysis, thus preventing glucose turnover that produces NADPH via pentose phosphate pathway. This chain is ATP-dependent 6-phosphofructokinase, liver type, found in Homo sapiens (Human).